The chain runs to 101 residues: Small ribosomal subunit protein uS14 (101 aa).

Belongs to the universal ribosomal protein uS14 family. In terms of assembly, part of the 30S ribosomal subunit. Contacts proteins S3 and S10.

Its function is as follows. Binds 16S rRNA, required for the assembly of 30S particles and may also be responsible for determining the conformation of the 16S rRNA at the A site. This is Small ribosomal subunit protein uS14 from Roseobacter denitrificans (strain ATCC 33942 / OCh 114) (Erythrobacter sp. (strain OCh 114)).